Consider the following 718-residue polypeptide: Polyribonucleotide nucleotidyltransferase (718 aa).

Mg(2+)-binding residues include aspartate 497 and aspartate 503. The 60-residue stretch at 564–623 (PRLLTLKIEPEHIGMVIGPGGKTIKGITEQTSCKIDIADDGTVTIASSEGERAERARQMI) folds into the KH domain. The S1 motif domain maps to 633–701 (GEVYLGRVTR…SKGRLNLTRL (69 aa)).

It belongs to the polyribonucleotide nucleotidyltransferase family. Interacts with RNase E (rne). Requires Mg(2+) as cofactor.

Its subcellular location is the cytoplasm. It catalyses the reaction RNA(n+1) + phosphate = RNA(n) + a ribonucleoside 5'-diphosphate. Involved in mRNA degradation. Catalyzes the phosphorolysis of single-stranded polyribonucleotides processively in the 3'- to 5'-direction. The chain is Polyribonucleotide nucleotidyltransferase from Synechocystis sp. (strain ATCC 27184 / PCC 6803 / Kazusa).